We begin with the raw amino-acid sequence, 291 residues long: m-AAA protease-interacting protein 1, mitochondrial (291 aa).

The transit peptide at 1 to 96 (MALAARLLPL…SLPASPIRSY (96 aa)) directs the protein to the mitochondrion.

In terms of assembly, interacts with AFG3L2. Interacts with SPG7. Interacts with SMDT1/EMRE (via the N-terminal transit peptide); interaction is direct and takes place before maturation of SMDT1/EMRE.

It localises to the mitochondrion matrix. Its function is as follows. Promotes sorting of SMDT1/EMRE in mitochondria by ensuring its maturation. Interacts with the transit peptide region of SMDT1/EMRE precursor protein in the mitochondrial matrix, leading to protect it against protein degradation by YME1L1, thereby ensuring SMDT1/EMRE maturation by the mitochondrial processing peptidase (PMPCA and PMPCB). The sequence is that of m-AAA protease-interacting protein 1, mitochondrial from Rattus norvegicus (Rat).